The primary structure comprises 174 residues: Gamma-crystallin D (174 aa).

2 consecutive Beta/gamma crystallin 'Greek key' domains span residues 2–40 (GKITFYEDRGFQGRHYECSTDHSNLQPYFSRCNSVRVDS) and 41–83 (GCWM…RLIP). A connecting peptide region spans residues 84-87 (HAGS). Beta/gamma crystallin 'Greek key' domains lie at 88–128 (HRIR…NVLE) and 129–171 (GCWV…RRVM).

Belongs to the beta/gamma-crystallin family. Detected in the superior olivary complex of the auditory hindbrain.

Its function is as follows. Crystallins are the dominant structural components of the vertebrate eye lens. This chain is Gamma-crystallin D (Crygd), found in Mus musculus (Mouse).